The following is a 207-amino-acid chain: Holliday junction branch migration complex subunit RuvA (207 aa).

Residues 1 to 64 form a domain I region; that stretch reads MIGLINGQVQ…EDAQLLYGFI (64 aa). The tract at residues 65–143 is domain II; it reads DRKERDVFRQ…NIEVDSSHLE (79 aa). A flexible linker region spans residues 144–152; that stretch reads FAMQPAPIS. The segment at 153-207 is domain III; that stretch reads AEGSIIAEVEGALISLGYKEREAQQAIKAAKSNGETFADTQSLLKATLQQFQSFK.

Belongs to the RuvA family. As to quaternary structure, homotetramer. Forms an RuvA(8)-RuvB(12)-Holliday junction (HJ) complex. HJ DNA is sandwiched between 2 RuvA tetramers; dsDNA enters through RuvA and exits via RuvB. An RuvB hexamer assembles on each DNA strand where it exits the tetramer. Each RuvB hexamer is contacted by two RuvA subunits (via domain III) on 2 adjacent RuvB subunits; this complex drives branch migration. In the full resolvosome a probable DNA-RuvA(4)-RuvB(12)-RuvC(2) complex forms which resolves the HJ.

The protein localises to the cytoplasm. Its function is as follows. The RuvA-RuvB-RuvC complex processes Holliday junction (HJ) DNA during genetic recombination and DNA repair, while the RuvA-RuvB complex plays an important role in the rescue of blocked DNA replication forks via replication fork reversal (RFR). RuvA specifically binds to HJ cruciform DNA, conferring on it an open structure. The RuvB hexamer acts as an ATP-dependent pump, pulling dsDNA into and through the RuvAB complex. HJ branch migration allows RuvC to scan DNA until it finds its consensus sequence, where it cleaves and resolves the cruciform DNA. This chain is Holliday junction branch migration complex subunit RuvA, found in Psychrobacter cryohalolentis (strain ATCC BAA-1226 / DSM 17306 / VKM B-2378 / K5).